Here is a 735-residue protein sequence, read N- to C-terminus: Catalase-peroxidase (735 aa).

Positions 95–223 form a cross-link, tryptophyl-tyrosyl-methioninium (Trp-Tyr) (with M-249); that stretch reads WHSAGTYRTG…LAAVQMGLIY (129 aa). H96 acts as the Proton acceptor in catalysis. The segment at residues 223–249 is a cross-link (tryptophyl-tyrosyl-methioninium (Tyr-Met) (with W-95)); it reads YVNPEGPDGVPDPIKSGIDIRETFARM. H264 is a heme b binding site.

The protein belongs to the peroxidase family. Peroxidase/catalase subfamily. As to quaternary structure, homodimer or homotetramer. Heme b is required as a cofactor. Post-translationally, formation of the three residue Trp-Tyr-Met cross-link is important for the catalase, but not the peroxidase activity of the enzyme.

It carries out the reaction H2O2 + AH2 = A + 2 H2O. The enzyme catalyses 2 H2O2 = O2 + 2 H2O. Its function is as follows. Bifunctional enzyme with both catalase and broad-spectrum peroxidase activity. This chain is Catalase-peroxidase, found in Aliarcobacter butzleri (strain RM4018) (Arcobacter butzleri).